We begin with the raw amino-acid sequence, 193 residues long: Gas vesicle protein C (193 aa).

5 consecutive repeats follow at residues 19-51 (VAEL…LQAF), 52-84 (YKDL…LLAF), 85-117 (HKEL…LLAF), 118-150 (YQEV…LLAF), and 151-183 (HKEL…LLKF). The segment at 19-183 (VAELSLETRE…KEQKESLLKF (165 aa)) is 5 X 33 AA tandem repeats.

Belongs to the gas vesicle GvpC family.

The protein resides in the gas vesicle. Its function is as follows. Confers stability, involved in shaping gas vesicles (GV), hollow, gas-filled proteinaceous nanostructures. During planktonic growth they allow positioning of the organism at a favorable depth for light or nutrient acquisition. The ratio of GvpA:GvpC is estimated to be 25:1. GvpC strengthens the GV wall, probably by connecting several GvpA proteins in the same and/or adjacent ribs. Removal of GvpC by SDS reduces the critical collapse pressure (CCP) of stored gas vesicles from 0.23 Mpa to 0.08 MPa. Removal of GvpC by urea reduces CCP of freshly isolated GVs from 0.550 MPa to 0.190 MPa; addition of recombinant GvpC restores CCP to 0.508 MPa. As the turgor pressure in this species is usually 0.35 MPa (plus the water column pressure in its growth environment), this protein is essential for GV formation. This is Gas vesicle protein C from Dolichospermum flosaquae (Anabaena flos-aquae).